The following is a 317-amino-acid chain: Tumor necrosis factor ligand superfamily member 11 (317 aa).

The segment covering 1-16 (MRRASRDYTKYLRGSE) has biased composition (basic and acidic residues). Positions 1–43 (MRRASRDYTKYLRGSEEMGGGPGAPHEGPLHAPPPPAPHQPPA) are disordered. At 1-47 (MRRASRDYTKYLRGSEEMGGGPGAPHEGPLHAPPPPAPHQPPAASRS) the chain is on the cytoplasmic side. The span at 31 to 41 (HAPPPPAPHQP) shows a compositional bias: pro residues. Residues 48-68 (MFVALLGLGLGQVVCSVALFF) form a helical; Signal-anchor for type II membrane protein membrane-spanning segment. Topologically, residues 69 to 317 (YFRAQMDPNR…FGAFKVRDID (249 aa)) are extracellular. The THD domain occupies 164–313 (PFAHLTINAT…DATYFGAFKV (150 aa)). Residues Asn-171 and Asn-198 are each glycosylated (N-linked (GlcNAc...) asparagine).

It belongs to the tumor necrosis factor family. As to quaternary structure, homotrimer. Interacts with TNFRSF11B. Interacts with TNFRSF11A. Interacts with FBN1 (via N-terminal domain) in a Ca(+2)-dependent manner. Interacts with TNFAIP6 (via both Link and CUB domains). The soluble form of isoform 1 derives from the membrane form by proteolytic processing. The cleavage may be catalyzed by ADAM17. Highest in the peripheral lymph nodes, weak in spleen, peripheral blood Leukocytes, bone marrow, heart, placenta, skeletal muscle, stomach and thyroid.

It localises to the cell membrane. Its subcellular location is the cytoplasm. The protein resides in the secreted. Its function is as follows. Cytokine that binds to TNFRSF11B/OPG and to TNFRSF11A/RANK. Osteoclast differentiation and activation factor. Augments the ability of dendritic cells to stimulate naive T-cell proliferation. May be an important regulator of interactions between T-cells and dendritic cells and may play a role in the regulation of the T-cell-dependent immune response. May also play an important role in enhanced bone-resorption in humoral hypercalcemia of malignancy. Induces osteoclastogenesis by activating multiple signaling pathways in osteoclast precursor cells, chief among which is induction of long lasting oscillations in the intracellular concentration of Ca (2+) resulting in the activation of NFATC1, which translocates to the nucleus and induces osteoclast-specific gene transcription to allow differentiation of osteoclasts. During osteoclast differentiation, in a TMEM64 and ATP2A2-dependent manner induces activation of CREB1 and mitochondrial ROS generation necessary for proper osteoclast generation. The chain is Tumor necrosis factor ligand superfamily member 11 (TNFSF11) from Homo sapiens (Human).